We begin with the raw amino-acid sequence, 429 residues long: Glutamate-1-semialdehyde 2,1-aminomutase (429 aa).

K272 carries the N6-(pyridoxal phosphate)lysine modification.

It belongs to the class-III pyridoxal-phosphate-dependent aminotransferase family. HemL subfamily. Pyridoxal 5'-phosphate serves as cofactor.

Its subcellular location is the cytoplasm. The enzyme catalyses (S)-4-amino-5-oxopentanoate = 5-aminolevulinate. The protein operates within porphyrin-containing compound metabolism; protoporphyrin-IX biosynthesis; 5-aminolevulinate from L-glutamyl-tRNA(Glu): step 2/2. This chain is Glutamate-1-semialdehyde 2,1-aminomutase, found in Methanothrix thermoacetophila (strain DSM 6194 / JCM 14653 / NBRC 101360 / PT) (Methanosaeta thermophila).